We begin with the raw amino-acid sequence, 249 residues long: Triosephosphate isomerase (249 aa).

Substrate contacts are provided by Asn12 and Lys14. Lys14 is modified (N6-acetyllysine). Tyr68 bears the 3'-nitrotyrosine mark. A phosphoserine mark is found at Ser80 and Ser106. Lys142 is covalently cross-linked (Glycyl lysine isopeptide (Lys-Gly) (interchain with G-Cter in SUMO1)). N6-succinyllysine is present on Lys149. At Lys156 the chain carries N6-acetyllysine; alternate. Lys156 carries the N6-succinyllysine; alternate modification. Ser159 is modified (phosphoserine). The Proton acceptor role is filled by Glu166. Position 173 is a phosphothreonine (Thr173). An N6-acetyllysine; alternate modification is found at Lys194. Lys194 bears the N6-succinyllysine; alternate mark. Residue Lys194 is modified to N6-methyllysine; alternate. Ser198 is subject to Phosphoserine. Tyr209 bears the 3'-nitrotyrosine mark. Residue Ser212 is modified to Phosphoserine. Residue Thr214 is modified to Phosphothreonine. Ser223 carries the phosphoserine modification. Lys238 carries the post-translational modification N6-acetyllysine.

The protein belongs to the triosephosphate isomerase family. Homodimer.

Its subcellular location is the cytoplasm. It catalyses the reaction D-glyceraldehyde 3-phosphate = dihydroxyacetone phosphate. The catalysed reaction is dihydroxyacetone phosphate = methylglyoxal + phosphate. It functions in the pathway carbohydrate biosynthesis; gluconeogenesis. Its pathway is carbohydrate degradation; glycolysis; D-glyceraldehyde 3-phosphate from glycerone phosphate: step 1/1. In terms of biological role, triosephosphate isomerase is an extremely efficient metabolic enzyme that catalyzes the interconversion between dihydroxyacetone phosphate (DHAP) and D-glyceraldehyde-3-phosphate (G3P) in glycolysis and gluconeogenesis. Its function is as follows. It is also responsible for the non-negligible production of methylglyoxal a reactive cytotoxic side-product that modifies and can alter proteins, DNA and lipids. In Mesocricetus auratus (Golden hamster), this protein is Triosephosphate isomerase.